The chain runs to 250 residues: Small ribosomal subunit protein uS2 (250 aa).

Belongs to the universal ribosomal protein uS2 family.

The protein is Small ribosomal subunit protein uS2 of Paraburkholderia phymatum (strain DSM 17167 / CIP 108236 / LMG 21445 / STM815) (Burkholderia phymatum).